The primary structure comprises 492 residues: 3-octaprenyl-4-hydroxybenzoate carboxy-lyase (492 aa).

N177 contacts Mn(2+). Prenylated FMN is bound by residues 180-182, 194-196, and 199-200; these read IYR, RWL, and RG. E243 serves as a coordination point for Mn(2+). The active-site Proton donor is D292.

Belongs to the UbiD family. As to quaternary structure, homohexamer. Requires prenylated FMN as cofactor. Mn(2+) serves as cofactor.

The protein resides in the cell membrane. It carries out the reaction a 4-hydroxy-3-(all-trans-polyprenyl)benzoate + H(+) = a 2-(all-trans-polyprenyl)phenol + CO2. The protein operates within cofactor biosynthesis; ubiquinone biosynthesis. Functionally, catalyzes the decarboxylation of 3-octaprenyl-4-hydroxy benzoate to 2-octaprenylphenol, an intermediate step in ubiquinone biosynthesis. The protein is 3-octaprenyl-4-hydroxybenzoate carboxy-lyase of Neisseria gonorrhoeae (strain ATCC 700825 / FA 1090).